Here is a 308-residue protein sequence, read N- to C-terminus: Ornithine carbamoyltransferase (308 aa).

Carbamoyl phosphate is bound by residues 53 to 56 (STRT), Gln80, Arg104, and 131 to 134 (HPCQ). L-ornithine contacts are provided by residues Asn162, Asp225, and 229-230 (SM). Carbamoyl phosphate contacts are provided by residues 265-266 (CL) and Arg293.

It belongs to the aspartate/ornithine carbamoyltransferase superfamily. OTCase family.

Its subcellular location is the cytoplasm. The catalysed reaction is carbamoyl phosphate + L-ornithine = L-citrulline + phosphate + H(+). The protein operates within amino-acid biosynthesis; L-arginine biosynthesis; L-arginine from L-ornithine and carbamoyl phosphate: step 1/3. In terms of biological role, reversibly catalyzes the transfer of the carbamoyl group from carbamoyl phosphate (CP) to the N(epsilon) atom of ornithine (ORN) to produce L-citrulline. The protein is Ornithine carbamoyltransferase (argF) of Synechocystis sp. (strain ATCC 27184 / PCC 6803 / Kazusa).